The following is a 238-amino-acid chain: Orotidine 5'-phosphate decarboxylase (238 aa).

Residues Asp10, Lys32, 59-68, Thr122, Arg184, Gln193, Gly213, and Arg214 contribute to the substrate site; that span reads DLKLHDIPNT. The Proton donor role is filled by Lys61.

Belongs to the OMP decarboxylase family. Type 1 subfamily. Homodimer.

It carries out the reaction orotidine 5'-phosphate + H(+) = UMP + CO2. It participates in pyrimidine metabolism; UMP biosynthesis via de novo pathway; UMP from orotate: step 2/2. Catalyzes the decarboxylation of orotidine 5'-monophosphate (OMP) to uridine 5'-monophosphate (UMP). This is Orotidine 5'-phosphate decarboxylase from Bacillus cereus (strain ZK / E33L).